Here is a 187-residue protein sequence, read N- to C-terminus: Meiotically up-regulated protein C1442.13c (187 aa).

Disordered regions lie at residues Q15–E46 and I119–N145. Positions P26 to K41 are enriched in basic residues. The G-patch domain maps to N145–H187.

The protein resides in the nucleus. Its subcellular location is the cytoplasm. The protein localises to the cytoskeleton. It is found in the microtubule organizing center. It localises to the spindle pole body. Its function is as follows. Has a role in meiosis and sporulation. Required for meiotic chromosome segregation. This Schizosaccharomyces pombe (strain 972 / ATCC 24843) (Fission yeast) protein is Meiotically up-regulated protein C1442.13c.